The following is a 169-amino-acid chain: Putative antitoxin Rv0268c (169 aa).

Positions 1 to 11 are enriched in basic residues; it reads MGTRSKSRTRQ. The segment at 1-35 is disordered; that stretch reads MGTRSKSRTRQLKQSNGCTATTSGASDRRRRARRR. Residues 120–153 adopt a coiled-coil conformation; the sequence is AAILISAERYESLMEELEDLRDRLSVHEREHVTM.

Belongs to the phD/YefM antitoxin family.

Its function is as follows. Putative antitoxin component of a type II toxin-antitoxin (TA) system; however the expected toxin coding sequence is not found adjacent to this gene. This is Putative antitoxin Rv0268c from Mycobacterium tuberculosis (strain ATCC 25618 / H37Rv).